We begin with the raw amino-acid sequence, 194 residues long: Xanthine phosphoribosyltransferase (194 aa).

Residues L20 and N27 each coordinate xanthine. 128-132 (ANGQA) serves as a coordination point for 5-phospho-alpha-D-ribose 1-diphosphate. K156 is a binding site for xanthine.

Belongs to the purine/pyrimidine phosphoribosyltransferase family. Xpt subfamily. In terms of assembly, homodimer.

It localises to the cytoplasm. It catalyses the reaction XMP + diphosphate = xanthine + 5-phospho-alpha-D-ribose 1-diphosphate. The protein operates within purine metabolism; XMP biosynthesis via salvage pathway; XMP from xanthine: step 1/1. Converts the preformed base xanthine, a product of nucleic acid breakdown, to xanthosine 5'-monophosphate (XMP), so it can be reused for RNA or DNA synthesis. The protein is Xanthine phosphoribosyltransferase of Oceanobacillus iheyensis (strain DSM 14371 / CIP 107618 / JCM 11309 / KCTC 3954 / HTE831).